The primary structure comprises 1021 residues: Putative 115 kDa protein in type-1 retrotransposable element R1DM (1021 aa).

One can recognise a Reverse transcriptase domain in the interval 479 to 741 (RCIRLGYFPA…RSCRYLGITV (263 aa)). A gag-like cysteine motif region spans residues 955–971 (CACGDPYEDWMHILCAC).

This is Putative 115 kDa protein in type-1 retrotransposable element R1DM (R1A1-element\ORF2) from Drosophila melanogaster (Fruit fly).